The primary structure comprises 224 residues: MIKLGNDWDELLKNEFNQPYYLTLRQFLKKEYQTKKVFPDMYDIFNALKHTAYKDVKVVILGQDPYHGPGQAHGLSFSVQQGVQIPPSLQNIYLELHNDLNCEIPNNGYLIPWADQGVLLLNTVLTVRAGQANSHRGQGWEILTNHIIEIINQKEEPVVFLLWGSNAKEKLQLLTNPKHTAFTSVHPSPLSASRGFMGCKHFSKTNQFLEQNGVKPIDWQIPSI.

Aspartate 64 (proton acceptor) is an active-site residue.

The protein belongs to the uracil-DNA glycosylase (UDG) superfamily. UNG family.

The protein localises to the cytoplasm. The enzyme catalyses Hydrolyzes single-stranded DNA or mismatched double-stranded DNA and polynucleotides, releasing free uracil.. Functionally, excises uracil residues from the DNA which can arise as a result of misincorporation of dUMP residues by DNA polymerase or due to deamination of cytosine. The polypeptide is Uracil-DNA glycosylase 2 (Listeria monocytogenes serovar 1/2a (strain ATCC BAA-679 / EGD-e)).